Consider the following 900-residue polypeptide: DNA mismatch repair protein MutS (900 aa).

637 to 644 is a binding site for ATP; sequence GPNMAGKS.

It belongs to the DNA mismatch repair MutS family.

Functionally, this protein is involved in the repair of mismatches in DNA. It is possible that it carries out the mismatch recognition step. This protein has a weak ATPase activity. The protein is DNA mismatch repair protein MutS of Methanosarcina barkeri (strain Fusaro / DSM 804).